The chain runs to 250 residues: Large ribosomal subunit protein uL13c (250 aa).

The N-terminal 47 residues, 1–47 (MATMACASSLTFPSAQTQKSFFGTNVKQTPVLSFPRPTVAAAVAVSA), are a transit peptide targeting the chloroplast.

In terms of assembly, component of the chloroplast large ribosomal subunit (LSU). Mature 70S chloroplast ribosomes of higher plants consist of a small (30S) and a large (50S) subunit. The 30S small subunit contains 1 molecule of ribosomal RNA (16S rRNA) and 24 different proteins. The 50S large subunit contains 3 rRNA molecules (23S, 5S and 4.5S rRNA) and 33 different proteins.

Its subcellular location is the plastid. It localises to the chloroplast. Functionally, component of the chloroplast ribosome (chloro-ribosome), a dedicated translation machinery responsible for the synthesis of chloroplast genome-encoded proteins, including proteins of the transcription and translation machinery and components of the photosynthetic apparatus. The sequence is that of Large ribosomal subunit protein uL13c (RPL13) from Spinacia oleracea (Spinach).